The sequence spans 94 residues: Protein SpdA (94 aa).

Residues 41–68 (GPILLALVAAGGSVGVVMTLCLLLQTAA) traverse the membrane as a helical segment.

It localises to the cell membrane. Functionally, involved in plasmid transfer. This chain is Protein SpdA (spdA), found in Streptomyces lividans.